We begin with the raw amino-acid sequence, 569 residues long: MKFSKFFAPTLKEAPKDAILPSHVFLIRAGFIEQLGSGLYNFLPLGEMVIEKIKAVIKDEMDKTGALQVNFSFVTPSEFWQESGRYNVYGKELLRIKDRKENGFVLSPTNEESSVKMIANKITSYKQLPIHIYQINTKFRDEARPRFGLLRGREFIMKDGYSFHANMEDLKREFDVMEKTYTNIFSRLGLNFRAVEADSGAIGGSGSKEFMVLAQNGEDDILVCESCKYAANIEAAVRVKREAPCAAPETEKMQKFHTPNMKTIDDVANFFKVDKFFTVKAVIKKAVFVDKSEIVLFFVRGDDELQETKALNACGALEFEDASEDEIKKAGLIAGFCGPAGLPDDINFYIDKELKNERNLIVGANEKDYHIVGFAVTNFKDERFVDLSQVRAGDCCPKCGAKLDIKKGIEVGHIFQLGQKYSKAMNAIFLDENGKAVPFFMGCYGIGVSRLLAVMIEAGHDEKGCIWNTQTAPFKLEIIISNSKDEDASNFAIQLYEKCKNAGISTLLDDRKERFGVKMNDFELIGFPFAVLVGKGLKDGNVELIERKGLNKKIVSSGEIFETLKGILC.

Belongs to the class-II aminoacyl-tRNA synthetase family. ProS type 1 subfamily. Homodimer.

It localises to the cytoplasm. The enzyme catalyses tRNA(Pro) + L-proline + ATP = L-prolyl-tRNA(Pro) + AMP + diphosphate. Its function is as follows. Catalyzes the attachment of proline to tRNA(Pro) in a two-step reaction: proline is first activated by ATP to form Pro-AMP and then transferred to the acceptor end of tRNA(Pro). As ProRS can inadvertently accommodate and process non-cognate amino acids such as alanine and cysteine, to avoid such errors it has two additional distinct editing activities against alanine. One activity is designated as 'pretransfer' editing and involves the tRNA(Pro)-independent hydrolysis of activated Ala-AMP. The other activity is designated 'posttransfer' editing and involves deacylation of mischarged Ala-tRNA(Pro). The misacylated Cys-tRNA(Pro) is not edited by ProRS. In Campylobacter hominis (strain ATCC BAA-381 / DSM 21671 / CCUG 45161 / LMG 19568 / NCTC 13146 / CH001A), this protein is Proline--tRNA ligase.